A 27-amino-acid chain; its full sequence is Potassium channel toxin alpha-KTx 32.1 (27 aa).

2 cysteine pairs are disulfide-bonded: C5/C18 and C12/C25.

Expressed by the venom gland.

The protein localises to the secreted. Functionally, blocker of voltage-gated potassium channels. Inhibits voltage-gated potassium channels Kv1.2/KCNA2 (Kd=0.96 nM) and Kv1.3/KCNA3 (Kd=1.3 nM). Does not inhibit Kv1.1/KCNA1, Kv1.5/KCNA5, Kv11.1/KCNH2/ERG1, KCa1.1/KCNMA1, KCa3.1/KCNN4, NaV1.5/SCN5A, NaV1.4/SCN4A or HV1/HVCN1. Strongly inhibits the expression of the activation markers interleukin-2 receptor and CD40 ligand/CD40LG in anti-CD3-activated CD4(+) TEM lymphocytes. The polypeptide is Potassium channel toxin alpha-KTx 32.1 (Centruroides margaritatus (Central American bark Scorpion)).